We begin with the raw amino-acid sequence, 394 residues long: RNA binding protein fox-1 homolog 2 (394 aa).

Disordered regions lie at residues 1 to 70 and 83 to 135; these read MGRL…DYAG and TQAH…HVSN. Polar residues-rich tracts occupy residues 24 to 36 and 83 to 103; these read RDSQ…TTTP and TQAH…SLTT. Residues 105 to 125 show a composition bias toward low complexity; it reads GGAQTDGQQSQTQSSENSESK. The region spanning 129-205 is the RRM domain; that stretch reads KRLHVSNIPF…RKIEVNNATA (77 aa). Arginine 285 carries the post-translational modification Omega-N-methylarginine. Asymmetric dimethylarginine is present on residues arginine 301 and arginine 333. Arginine 385 and arginine 390 each carry asymmetric dimethylarginine; alternate. Residues arginine 385 and arginine 390 each carry the omega-N-methylarginine; alternate modification.

In terms of assembly, interacts with ER-alpha N-terminal activation domain. Interacts with RBPMS; the interaction allows cooperative assembly of stable cell-specific alternative splicing regulatory complexes.

The protein localises to the nucleus. The protein resides in the cytoplasm. Its function is as follows. RNA-binding protein that regulates alternative splicing events by binding to 5'-UGCAUGU-3' elements. Prevents binding of U2AF2 to the 3'-splice site. Regulates alternative splicing of tissue-specific exons and of differentially spliced exons during erythropoiesis. Seems to act as a coregulatory factor of ER-alpha. Together with RNA binding proteins RBPMS and MBNL1/2, activates vascular smooth muscle cells alternative splicing events. In Bos taurus (Bovine), this protein is RNA binding protein fox-1 homolog 2 (RBFOX2).